A 357-amino-acid chain; its full sequence is Cobalt-precorrin-5B C(1)-methyltransferase (357 aa).

Belongs to the CbiD family.

The enzyme catalyses Co-precorrin-5B + S-adenosyl-L-methionine = Co-precorrin-6A + S-adenosyl-L-homocysteine. The protein operates within cofactor biosynthesis; adenosylcobalamin biosynthesis; cob(II)yrinate a,c-diamide from sirohydrochlorin (anaerobic route): step 6/10. Functionally, catalyzes the methylation of C-1 in cobalt-precorrin-5B to form cobalt-precorrin-6A. The sequence is that of Cobalt-precorrin-5B C(1)-methyltransferase from Rhodospirillum rubrum (strain ATCC 11170 / ATH 1.1.1 / DSM 467 / LMG 4362 / NCIMB 8255 / S1).